The following is a 243-amino-acid chain: Coenzyme F420 hydrogenase subunit gamma (243 aa).

2 4Fe-4S ferredoxin-type domains span residues 182–210 (IKEV…DMVE) and 211–241 (AKPN…IIRK). 8 residues coordinate [4Fe-4S] cluster: Cys-191, Cys-194, Cys-197, Cys-201, Cys-220, Cys-223, Cys-226, and Cys-230.

This sequence belongs to the FrhG family. In terms of assembly, complex of alpha, beta and gamma subunits. Ni(2+) serves as cofactor. Requires iron-sulfur cluster as cofactor. FAD is required as a cofactor.

It carries out the reaction oxidized coenzyme F420-(gamma-L-Glu)(n) + H2 + H(+) = reduced coenzyme F420-(gamma-L-Glu)(n). Reduces the physiological low-potential two-electron acceptor coenzyme F420, and the artificial one-electron acceptor methylviologen. The polypeptide is Coenzyme F420 hydrogenase subunit gamma (frhG) (Methanococcus voltae).